The primary structure comprises 243 residues: Chromosome partition protein MukE (243 aa).

Residues 214–243 form a disordered region; the sequence is DSLALEKQADLNEVDDNDELEDELDDEEHA. Residues 225–243 show a composition bias toward acidic residues; sequence NEVDDNDELEDELDDEEHA.

It belongs to the MukE family. In terms of assembly, interacts, and probably forms a ternary complex, with MukF and MukB. The complex formation is stimulated by calcium or magnesium.

It localises to the cytoplasm. The protein localises to the nucleoid. Its function is as follows. Involved in chromosome condensation, segregation and cell cycle progression. May participate in facilitating chromosome segregation by condensation DNA from both sides of a centrally located replisome during cell division. Probably acts via its interaction with MukB and MukF. This is Chromosome partition protein MukE from Pasteurella multocida (strain Pm70).